A 100-amino-acid polypeptide reads, in one-letter code: Large ribosomal subunit protein uL23 (100 aa).

Belongs to the universal ribosomal protein uL23 family. As to quaternary structure, part of the 50S ribosomal subunit. Contacts protein L29, and trigger factor when it is bound to the ribosome.

One of the early assembly proteins it binds 23S rRNA. One of the proteins that surrounds the polypeptide exit tunnel on the outside of the ribosome. Forms the main docking site for trigger factor binding to the ribosome. This Prochlorococcus marinus (strain MIT 9312) protein is Large ribosomal subunit protein uL23.